A 303-amino-acid chain; its full sequence is Y-box-binding protein 1 (303 aa).

The segment covering 1-12 (MSSEVETQQQQP) has biased composition (polar residues). Positions 1–28 (MSSEVETQQQQPDALEGKAGQEPAATVG) are disordered. The 65-residue stretch at 39 to 103 (GTVKWFNVRN…GEKGAEAANV (65 aa)) folds into the CSD domain. Residues 43 to 48 (WFNVRN) are C5-methylcytosine binding. The disordered stretch occupies residues 98-303 (AEAANVTGPE…TPEAEQGGAE (206 aa)). The segment covering 122 to 132 (HYRRYPRRRGP) has biased composition (basic residues). Low complexity-rich tracts occupy residues 133–143 (PRNYQQNYQNN) and 173–187 (PPYY…RPQY). 2 stretches are compositionally biased toward basic residues: residues 220 to 229 (FRPRFRRGPP) and 258 to 270 (RRYR…RRRR). Over residues 271-284 (PENPKSQDGKETKA) the composition is skewed to basic and acidic residues.

This sequence belongs to the YBX1 family.

The protein localises to the cytoplasm. It is found in the nucleus. Its subcellular location is the cytoplasmic granule. The protein resides in the secreted. It localises to the extracellular exosome. The protein localises to the P-body. In terms of biological role, DNA- and RNA-binding protein involved in various processes, such as translational repression, RNA stabilization, mRNA splicing and transcription regulation. Binds preferentially to the 5'-[CU]CUGCG-3' RNA motif and specifically recognizes mRNA transcripts modified by C5-methylcytosine (m5C). Promotes mRNA stabilization: acts by binding to m5C-containing mRNAs and preventing mRNA decay. Plays a role in the maternal-to-zygotic transition in early embryo by binding to m5C-containing maternal mRNAs and preventing their degradation. Also promotes maternal-to-zygotic transition in oocytes and embryos by promoting translation repression; molecular mechanisms governing translation repression are unknown. Plays a key role in RNA composition of extracellular exosomes by defining the sorting of small non-coding RNAs, such as tRNAs, Y RNAs, Vault RNAs and miRNAs. Probably sorts RNAs in exosomes by recognizing and binding C5-methylcytosine (m5C)-containing RNAs. Acts as a key effector of epidermal progenitors by preventing epidermal progenitor senescence: acts by regulating the translation of a senescence-associated subset of cytokine mRNAs, possibly by binding to m5C-containing mRNAs. Also involved in pre-mRNA alternative splicing regulation: binds to splice sites in pre-mRNA and regulates splice site selection. Also able to bind DNA and regulate transcription. Binds to promoters that contain a Y-box (5'-CTGATTGGCCAA-3'). Promotes separation of DNA strands that contain mismatches or are modified by cisplatin. Has endonucleolytic activity and can introduce nicks or breaks into double-stranded DNA, suggesting a role in DNA repair. The secreted form acts as an extracellular mitogen and stimulates cell migration and proliferation. This Xenopus laevis (African clawed frog) protein is Y-box-binding protein 1.